We begin with the raw amino-acid sequence, 78 residues long: Large ribosomal subunit protein bL28 (78 aa).

The disordered stretch occupies residues 1-30 (MAAHCQVTGAQPGFGHSISHSHRRTKRRWN). Residues 19–30 (SHSHRRTKRRWN) are compositionally biased toward basic residues.

Belongs to the bacterial ribosomal protein bL28 family.

This chain is Large ribosomal subunit protein bL28, found in Kocuria rhizophila (strain ATCC 9341 / DSM 348 / NBRC 103217 / DC2201).